The chain runs to 239 residues: Putative ABC transporter ATP-binding protein AlbC (239 aa).

Positions L4 to H238 constitute an ABC transporter domain. G37–T44 contributes to the ATP binding site.

This sequence belongs to the ABC transporter superfamily.

Involved in the production of the bacteriocin subtilosin. Required for immunity to subtilosin. The sequence is that of Putative ABC transporter ATP-binding protein AlbC (albC) from Bacillus subtilis (strain 168).